The primary structure comprises 564 residues: MFS-type transporter dmxR4 (564 aa).

Positions 1–61 are disordered; it reads MSSERPDGSA…PAKEAPAKPA (61 aa). The segment covering 25–44 has biased composition (polar residues); it reads TDSSRTSNDASQTSQDTAVQ. The segment covering 47–57 has biased composition (basic and acidic residues); the sequence is PPKEAPAKEAP. 5 consecutive transmembrane segments (helical) span residues 71 to 91, 106 to 126, 138 to 158, 169 to 189, and 199 to 219; these read IALL…DRSI, AGDI…FQLL, TVFV…GAAP, LAGI…VFLI, and GLFG…GGGF. An N-linked (GlcNAc...) asparagine glycan is attached at asparagine 222. 7 helical membrane-spanning segments follow: residues 227-247, 265-285, 299-319, 348-368, 376-396, 405-425, and 438-458; these read WCFY…ALWM, GLDL…LLAL, IIAL…LQAF, GVHL…GGFF, SPLA…IYTF, WIGS…APNL, and SALA…VSVG. Asparagine 469 carries N-linked (GlcNAc...) asparagine glycosylation. The next 2 membrane-spanning stretches (helical) occupy residues 470-490 and 512-532; these read LSWI…VSFL and VFMI…SMEW. Positions 534–564 are disordered; the sequence is SVKSRGSWDEKPAAKPTDKPTEEKKVPPEAV. Residues 539-564 show a composition bias toward basic and acidic residues; sequence GSWDEKPAAKPTDKPTEEKKVPPEAV.

The protein belongs to the major facilitator superfamily. TCR/Tet family.

The protein localises to the membrane. Functionally, MFS-type transporter; part of the gene cluster that mediates the biosynthesis of the dimeric xanthones cryptosporioptides. The sequence is that of MFS-type transporter dmxR4 from Cryptosporiopsis sp. (strain 8999).